Consider the following 566-residue polypeptide: Proline--tRNA ligase (566 aa).

It belongs to the class-II aminoacyl-tRNA synthetase family. ProS type 1 subfamily. Homodimer.

Its subcellular location is the cytoplasm. It carries out the reaction tRNA(Pro) + L-proline + ATP = L-prolyl-tRNA(Pro) + AMP + diphosphate. Functionally, catalyzes the attachment of proline to tRNA(Pro) in a two-step reaction: proline is first activated by ATP to form Pro-AMP and then transferred to the acceptor end of tRNA(Pro). As ProRS can inadvertently accommodate and process non-cognate amino acids such as alanine and cysteine, to avoid such errors it has two additional distinct editing activities against alanine. One activity is designated as 'pretransfer' editing and involves the tRNA(Pro)-independent hydrolysis of activated Ala-AMP. The other activity is designated 'posttransfer' editing and involves deacylation of mischarged Ala-tRNA(Pro). The misacylated Cys-tRNA(Pro) is not edited by ProRS. This chain is Proline--tRNA ligase, found in Exiguobacterium sibiricum (strain DSM 17290 / CCUG 55495 / CIP 109462 / JCM 13490 / 255-15).